We begin with the raw amino-acid sequence, 207 residues long: ATP-dependent Clp protease proteolytic subunit (207 aa).

Ser111 acts as the Nucleophile in catalysis. His136 is an active-site residue.

The protein belongs to the peptidase S14 family. As to quaternary structure, fourteen ClpP subunits assemble into 2 heptameric rings which stack back to back to give a disk-like structure with a central cavity, resembling the structure of eukaryotic proteasomes.

It is found in the cytoplasm. It carries out the reaction Hydrolysis of proteins to small peptides in the presence of ATP and magnesium. alpha-casein is the usual test substrate. In the absence of ATP, only oligopeptides shorter than five residues are hydrolyzed (such as succinyl-Leu-Tyr-|-NHMec, and Leu-Tyr-Leu-|-Tyr-Trp, in which cleavage of the -Tyr-|-Leu- and -Tyr-|-Trp bonds also occurs).. Cleaves peptides in various proteins in a process that requires ATP hydrolysis. Has a chymotrypsin-like activity. Plays a major role in the degradation of misfolded proteins. The chain is ATP-dependent Clp protease proteolytic subunit from Burkholderia mallei (strain ATCC 23344).